The following is a 428-amino-acid chain: Histidinol dehydrogenase (428 aa).

Tyrosine 125, glutamine 187, and asparagine 210 together coordinate NAD(+). Residues serine 234, glutamine 256, and histidine 259 each coordinate substrate. Glutamine 256 and histidine 259 together coordinate Zn(2+). Active-site proton acceptor residues include glutamate 323 and histidine 324. Histidine 324, aspartate 357, glutamate 411, and histidine 416 together coordinate substrate. Aspartate 357 lines the Zn(2+) pocket. Histidine 416 contributes to the Zn(2+) binding site.

This sequence belongs to the histidinol dehydrogenase family. Zn(2+) is required as a cofactor.

It catalyses the reaction L-histidinol + 2 NAD(+) + H2O = L-histidine + 2 NADH + 3 H(+). It functions in the pathway amino-acid biosynthesis; L-histidine biosynthesis; L-histidine from 5-phospho-alpha-D-ribose 1-diphosphate: step 9/9. In terms of biological role, catalyzes the sequential NAD-dependent oxidations of L-histidinol to L-histidinaldehyde and then to L-histidine. The polypeptide is Histidinol dehydrogenase (Bacteroides thetaiotaomicron (strain ATCC 29148 / DSM 2079 / JCM 5827 / CCUG 10774 / NCTC 10582 / VPI-5482 / E50)).